A 483-amino-acid chain; its full sequence is UDP-N-acetylmuramoyl-L-alanyl-D-glutamate--2,6-diaminopimelate ligase (483 aa).

S29 serves as a coordination point for UDP-N-acetyl-alpha-D-muramoyl-L-alanyl-D-glutamate. 107 to 113 (GTSGKTS) serves as a coordination point for ATP. UDP-N-acetyl-alpha-D-muramoyl-L-alanyl-D-glutamate contacts are provided by residues 149–150 (TT), S176, Q182, and R184. K216 is subject to N6-carboxylysine. Meso-2,6-diaminopimelate is bound by residues R380, 404–407 (DNPR), G452, and E456. A Meso-diaminopimelate recognition motif motif is present at residues 404–407 (DNPR).

The protein belongs to the MurCDEF family. MurE subfamily. The cofactor is Mg(2+). Post-translationally, carboxylation is probably crucial for Mg(2+) binding and, consequently, for the gamma-phosphate positioning of ATP.

It is found in the cytoplasm. It carries out the reaction UDP-N-acetyl-alpha-D-muramoyl-L-alanyl-D-glutamate + meso-2,6-diaminopimelate + ATP = UDP-N-acetyl-alpha-D-muramoyl-L-alanyl-gamma-D-glutamyl-meso-2,6-diaminopimelate + ADP + phosphate + H(+). The protein operates within cell wall biogenesis; peptidoglycan biosynthesis. In terms of biological role, catalyzes the addition of meso-diaminopimelic acid to the nucleotide precursor UDP-N-acetylmuramoyl-L-alanyl-D-glutamate (UMAG) in the biosynthesis of bacterial cell-wall peptidoglycan. The protein is UDP-N-acetylmuramoyl-L-alanyl-D-glutamate--2,6-diaminopimelate ligase of Chelativorans sp. (strain BNC1).